Here is a 552-residue protein sequence, read N- to C-terminus: Probable inorganic phosphate transporter 1-10 (552 aa).

At 1 to 22 (MAPIGVLTALDQARTQYYHFKA) the chain is on the cytoplasmic side. Residues 23–43 (IVIAGMGLFTDSYDLFCIAPV) traverse the membrane as a helical segment. The Extracellular segment spans residues 44-68 (MKIVGRVYYSDGGARPGVTPPAVVS). Residues 69 to 89 (ATVGVALLGAVIGNVVFGALG) traverse the membrane as a helical segment. The Cytoplasmic segment spans residues 90-96 (DRVGRRR). The helical transmembrane segment at 97–117 (VYGACLLLMVCSSVGSGFSVC) threads the bilayer. The Extracellular segment spans residues 118-123 (RTRRCA). Residues 124-144 (LASLCFFRFLLGVGVGGDYPL) traverse the membrane as a helical segment. At 145–158 (SATIMSEFANRRTR) the chain is on the cytoplasmic side. The helical transmembrane segment at 159–179 (GAFIAAVFSMQGFGILASSAV) threads the bilayer. Topologically, residues 180 to 203 (TMAVAAAFDHYTGYPAPLDTPECA) are extracellular. Residues 204 to 224 (DLAWRIILMAGAVPAALTYYW) form a helical membrane-spanning segment. Over 225 to 295 (RMSMPETARY…RRFVRQHGRD (71 aa)) the chain is Cytoplasmic. The helical transmembrane segment at 296–316 (LFACAAAWFLLDIPYYSSTLF) threads the bilayer. The Extracellular portion of the chain corresponds to 317–342 (QSQIYRPLFPAPGLINAFQEAFNVAK). A helical transmembrane segment spans residues 343-363 (FQAVIAVASTIPGYFVAVLLI). At 364–369 (DRVGRR) the chain is on the cytoplasmic side. A helical membrane pass occupies residues 370–390 (CLQMAGFLLMAVFLFALAGPY). Topologically, residues 391 to 397 (DGYWRDH) are extracellular. The helical transmembrane segment at 398-418 (GAHAGYIVLYSLTFFSANLGP) threads the bilayer. Residues 419–439 (NTTTFILPAELFPARFRSTCH) are Cytoplasmic-facing. Residues 440-460 (GLSGAAGKLGALVGSIGFLWA) traverse the membrane as a helical segment. The Extracellular segment spans residues 461 to 473 (SQQKDGAAAGHLP). Residues 474 to 494 (GIGMMYALFVLGGICLLGLAL) form a helical membrane-spanning segment. Residues 495 to 552 (TYVFTPETMMRSLEENESDRAQTQVGDGGSDTEAAKSPASMASSHLSMSPILPARVSV) are Cytoplasmic-facing. Residues 507-540 (LEENESDRAQTQVGDGGSDTEAAKSPASMASSHL) are disordered.

It belongs to the major facilitator superfamily. Phosphate:H(+) symporter (TC 2.A.1.9) family. As to expression, expressed at low levels in roots.

The protein localises to the membrane. Functionally, high-affinity transporter for external inorganic phosphate. The protein is Probable inorganic phosphate transporter 1-10 (PHT1-10) of Oryza sativa subsp. japonica (Rice).